Reading from the N-terminus, the 186-residue chain is Zinc finger AN1 domain-containing stress-associated protein 12 (186 aa).

2 AN1-type zinc fingers span residues 10–58 and 97–147; these read PDLG…HGSR and KKKK…INTA. Cys-16, Cys-21, Cys-31, Cys-34, Cys-39, His-42, His-48, Cys-50, Cys-103, Cys-108, Cys-120, Cys-123, Cys-128, His-131, His-137, and Cys-139 together coordinate Zn(2+). Positions 167–186 are disordered; sequence KGCGRGSSVSSKSSPSVRSF. The segment covering 172–186 has biased composition (low complexity); it reads GSSVSSKSSPSVRSF.

Its function is as follows. May be involved in environmental stress response. This chain is Zinc finger AN1 domain-containing stress-associated protein 12 (SAP12), found in Arabidopsis thaliana (Mouse-ear cress).